Consider the following 473-residue polypeptide: Bifunctional protein GlmU (473 aa).

Positions 1 to 226 are pyrophosphorylase; the sequence is MRAPVAVVIL…AGEASGINDL (226 aa). UDP-N-acetyl-alpha-D-glucosamine contacts are provided by residues 10–13, Lys24, Gln75, 80–81, 102–104, Gly136, Glu151, Asn166, and Asn224; these read LAAG, GT, and YGD. Asp104 is a binding site for Mg(2+). Position 224 (Asn224) interacts with Mg(2+). The linker stretch occupies residues 227 to 247; the sequence is VQLAEVEEAFQRRWARRLLQG. The tract at residues 248-473 is N-acetyltransferase; sequence GLRLVAPHRF…TPASGGAKEE (226 aa). Residues Arg330 and Lys348 each contribute to the UDP-N-acetyl-alpha-D-glucosamine site. His360 (proton acceptor) is an active-site residue. 2 residues coordinate UDP-N-acetyl-alpha-D-glucosamine: Tyr363 and Asn374. Acetyl-CoA is bound by residues Ala377, 383–384, Ser402, Ala420, and Arg437; that span reads NY. Positions 439–473 are disordered; it reads RARTIPGWQHPGLTGRRGPPDDNDATPASGGAKEE.

The protein in the N-terminal section; belongs to the N-acetylglucosamine-1-phosphate uridyltransferase family. This sequence in the C-terminal section; belongs to the transferase hexapeptide repeat family. Homotrimer. Requires Mg(2+) as cofactor.

Its subcellular location is the cytoplasm. The catalysed reaction is alpha-D-glucosamine 1-phosphate + acetyl-CoA = N-acetyl-alpha-D-glucosamine 1-phosphate + CoA + H(+). It catalyses the reaction N-acetyl-alpha-D-glucosamine 1-phosphate + UTP + H(+) = UDP-N-acetyl-alpha-D-glucosamine + diphosphate. It participates in nucleotide-sugar biosynthesis; UDP-N-acetyl-alpha-D-glucosamine biosynthesis; N-acetyl-alpha-D-glucosamine 1-phosphate from alpha-D-glucosamine 6-phosphate (route II): step 2/2. The protein operates within nucleotide-sugar biosynthesis; UDP-N-acetyl-alpha-D-glucosamine biosynthesis; UDP-N-acetyl-alpha-D-glucosamine from N-acetyl-alpha-D-glucosamine 1-phosphate: step 1/1. Its pathway is bacterial outer membrane biogenesis; LPS lipid A biosynthesis. In terms of biological role, catalyzes the last two sequential reactions in the de novo biosynthetic pathway for UDP-N-acetylglucosamine (UDP-GlcNAc). The C-terminal domain catalyzes the transfer of acetyl group from acetyl coenzyme A to glucosamine-1-phosphate (GlcN-1-P) to produce N-acetylglucosamine-1-phosphate (GlcNAc-1-P), which is converted into UDP-GlcNAc by the transfer of uridine 5-monophosphate (from uridine 5-triphosphate), a reaction catalyzed by the N-terminal domain. In Halorhodospira halophila (strain DSM 244 / SL1) (Ectothiorhodospira halophila (strain DSM 244 / SL1)), this protein is Bifunctional protein GlmU.